A 130-amino-acid chain; its full sequence is MIYGIGTDIIKIARIEAALGRHGDRFAERVLGVEELEKYHRRKAKVAARGLRFLATRFAAKEAFSKAIGLGMHMPMTWRAAQILNAPSGQPIVVTSGKLAEFMQENGLTAQVSITDEVEYAVAFVIVEKK.

Mg(2+) is bound by residues D8 and E62.

The protein belongs to the P-Pant transferase superfamily. AcpS family. Mg(2+) serves as cofactor.

The protein resides in the cytoplasm. The enzyme catalyses apo-[ACP] + CoA = holo-[ACP] + adenosine 3',5'-bisphosphate + H(+). In terms of biological role, transfers the 4'-phosphopantetheine moiety from coenzyme A to a Ser of acyl-carrier-protein. The protein is Holo-[acyl-carrier-protein] synthase of Herminiimonas arsenicoxydans.